Reading from the N-terminus, the 413-residue chain is MGAGTLLNGLEKENFPNNIHSDLPAYPNMDSQEDGNTSKESKRNSPVKQKSQKDEEKSSKMGTASNIFHENKDIHERSEHTDDFNDGLKLAPDSSPSLKECQFKNWESFWCNTEGYKTKHMQPFHFTSGLEEIKEPVMELNISTSPYKGQRPNSAPTEYSAATTAFTKTQLEVSFLKTNLLTYIKKEIDICLSSVPFFDDAVQMQKKFLEYRDIDLDEEYELKILGELLNDLNFFHMQENSLLNRELAVRRFSNQPESQNLPSIRDFRNPLLPIDNRPSPPLGLKRNGKSFEETYDFTSNTSNFWGEKAELQNSITGGTPYFFHPNNIHQTKPFMSFENQNELLFQRKNSDYKQHFNSGRNIHNGVESKSYRGVGLNDSYQKGYAAMTKSFGNIDLNRMPRRSNEEMYSWSRN.

The segment at 1 to 87 (MGAGTLLNGL…SEHTDDFNDG (87 aa)) is disordered. Basic and acidic residues predominate over residues 69–83 (HENKDIHERSEHTDD).

Interacts with itself. Interacts with MPC54, NUD1 and SPO21/MPC70.

It is found in the cytoplasm. It localises to the cytoskeleton. Its subcellular location is the microtubule organizing center. The protein localises to the spindle pole body. Functionally, involved in the pathway that organizes the shaping and sizing of the prospore membrane (PSM) during sporulation. Probable component of a core structural unit of the scaffold that initiates synthesis of the prospore membrane. This is Sporulation-specific protein 74 (SPO74) from Saccharomyces cerevisiae (strain ATCC 204508 / S288c) (Baker's yeast).